A 622-amino-acid chain; its full sequence is MFSHYRYKENSCQKREAIPDKSRVSLTFLQKRTDSSNVTVAVAVAVPIGAIIIVLSVVLIVVYRRCKKEPSMQDFDPNFEGDLYYLPKMDSSMNSANSDSNATEKRFIYGGYDDFLQPSIENSQSFKDYVRRINEHAPSAYNIASLASQNNSKLSVPSKHIDLSNKISFESLENSELIVSPQHSNTGQDCDQRCDSTSNPDVNEKSSHNNDNRLKSNYTSRSGLEPQCSREEEENIDRIRSIYNIYFEKSNSTIRSSVTSSIRRDSKLNIATRKSVNMSSQDNPNDTTLIEQSHFGSTTVQEIDSSSSANEEYEDATDYLQVPAPQENKNIASSVYSEVATREKVIPESSLSLTFPPPNGLSTRITSSIYSDTVAKDHIHSAKAPVRALSEGSGQSNLTSAQQYSTYFIDHCNQSNDDNYYYNYPLPLEHPQNYENIGDLPTPTQFIYSTSSHSLTSFKGRPKPPKTLKHVPTARLNGTALNPMDHPEMFYSSPTKIPSTSLTKQFCTPLPYQLRQSVVMTNPSELSMKPRYKPAGSLRNLIKAQYLPGNSSTTTSSSLSQPPSTLSNAINFRVSGLLDDTDILQPPSVGEILPFKASTEDLRKQLGTSHNYEITPYENVHV.

A helical transmembrane segment spans residues 42 to 62 (VAVAVPIGAIIIVLSVVLIVV). A compositionally biased stretch (polar residues) spans 181–201 (PQHSNTGQDCDQRCDSTSNPD). The interval 181–233 (PQHSNTGQDCDQRCDSTSNPDVNEKSSHNNDNRLKSNYTSRSGLEPQCSREEE) is disordered. The span at 202-214 (VNEKSSHNNDNRL) shows a compositional bias: basic and acidic residues.

The protein belongs to the SKG6/TOS2 family. Phosphorylated by CDC28.

The protein localises to the cell membrane. It is found in the bud membrane. Its function is as follows. Seems to be involved in the anchoring of CDC24 to the membrane of polarized growth sites. The protein is Protein TOS2 (TOS2) of Saccharomyces cerevisiae (strain ATCC 204508 / S288c) (Baker's yeast).